A 297-amino-acid chain; its full sequence is Cytidine deaminase (297 aa).

CMP/dCMP-type deaminase domains lie at 50 to 170 (SDKE…FGPK) and 189 to 297 (ETES…YASL). Position 91-93 (91-93 (NME)) interacts with substrate. A Zn(2+)-binding site is contributed by histidine 104. Glutamate 106 functions as the Proton donor in the catalytic mechanism. Residues cysteine 131 and cysteine 134 each contribute to the Zn(2+) site.

Belongs to the cytidine and deoxycytidylate deaminase family. In terms of assembly, homodimer. Zn(2+) serves as cofactor.

It carries out the reaction cytidine + H2O + H(+) = uridine + NH4(+). The enzyme catalyses 2'-deoxycytidine + H2O + H(+) = 2'-deoxyuridine + NH4(+). This enzyme scavenges exogenous and endogenous cytidine and 2'-deoxycytidine for UMP synthesis. This Aliivibrio fischeri (strain ATCC 700601 / ES114) (Vibrio fischeri) protein is Cytidine deaminase.